A 421-amino-acid polypeptide reads, in one-letter code: Ankyrin repeat domain-containing protein 61 (421 aa).

8 ANK repeats span residues 27-57 (TLHS…NQPL), 74-103 (QPIF…DPEV), 107-146 (QGFT…NAVL), 166-195 (NKHS…QVNA), 199-228 (SSMT…NVNC), 233-272 (TGNT…QVNA), 276-305 (EGQT…NVNI), and 309-342 (NGES…PLRL).

This Mus musculus (Mouse) protein is Ankyrin repeat domain-containing protein 61 (Ankrd61).